We begin with the raw amino-acid sequence, 155 residues long: Large ribosomal subunit protein uL22 (155 aa).

The segment at 109–155 (HITVIVESRPPKKAGKQGASASAARARRAQASKAATKKATDSKEGSE) is disordered. Basic and acidic residues predominate over residues 146–155 (KATDSKEGSE).

The protein belongs to the universal ribosomal protein uL22 family. In terms of assembly, part of the 50S ribosomal subunit.

This protein binds specifically to 23S rRNA; its binding is stimulated by other ribosomal proteins, e.g. L4, L17, and L20. It is important during the early stages of 50S assembly. It makes multiple contacts with different domains of the 23S rRNA in the assembled 50S subunit and ribosome. Its function is as follows. The globular domain of the protein is located near the polypeptide exit tunnel on the outside of the subunit, while an extended beta-hairpin is found that lines the wall of the exit tunnel in the center of the 70S ribosome. This chain is Large ribosomal subunit protein uL22, found in Mycolicibacterium vanbaalenii (strain DSM 7251 / JCM 13017 / BCRC 16820 / KCTC 9966 / NRRL B-24157 / PYR-1) (Mycobacterium vanbaalenii).